Reading from the N-terminus, the 123-residue chain is Large ribosomal subunit protein uL14 (123 aa).

The protein belongs to the universal ribosomal protein uL14 family. Part of the 50S ribosomal subunit. Forms a cluster with proteins L3 and L19. In the 70S ribosome, L14 and L19 interact and together make contacts with the 16S rRNA in bridges B5 and B8.

Binds to 23S rRNA. Forms part of two intersubunit bridges in the 70S ribosome. In Buchnera aphidicola subsp. Cinara cedri (strain Cc), this protein is Large ribosomal subunit protein uL14.